Reading from the N-terminus, the 494-residue chain is Serine carboxypeptidase-like 21 (494 aa).

The signal sequence occupies residues 1-23; it reads MGRLVEAIIASILLSLCFTITKS. N-linked (GlcNAc...) asparagine glycans are attached at residues asparagine 37 and asparagine 69. 3 disulfides stabilise this stretch: cysteine 85–cysteine 383, cysteine 247–cysteine 263, and cysteine 286–cysteine 350. Residue serine 179 is part of the active site. N-linked (GlcNAc...) asparagine glycans are attached at residues asparagine 198 and asparagine 248. Residue asparagine 402 is glycosylated (N-linked (GlcNAc...) asparagine). Aspartate 418 is a catalytic residue. Asparagine 460 carries an N-linked (GlcNAc...) asparagine glycan. Histidine 471 is a catalytic residue.

Belongs to the peptidase S10 family. In terms of tissue distribution, expressed in flowers and siliques.

It is found in the secreted. Its function is as follows. Probable carboxypeptidase. This Arabidopsis thaliana (Mouse-ear cress) protein is Serine carboxypeptidase-like 21 (SCPL21).